We begin with the raw amino-acid sequence, 1050 residues long: RecBCD enzyme subunit RecB (1050 aa).

Positions 1-443 (MKPFNIFDSN…LQLVNNYRST (443 aa)) constitute a UvrD-like helicase ATP-binding domain. Residues 1–766 (MKPFNIFDSN…TNYVKLEGTQ (766 aa)) are DNA-binding and helicase activity, interacts with RecC. 21–28 (ASAGTGKT) provides a ligand contact to ATP. Positions 458–701 (SPFLEIPGYL…KITTIHSSKG (244 aa)) constitute a UvrD-like helicase C-terminal domain. The segment at 814 to 1050 (PKTIFSFSST…KAIQKCQAYH (237 aa)) is nuclease activity, interacts with RecD and RecA. Mg(2+)-binding residues include His-859, Asp-945, and Asp-958. Asp-958 (for nuclease activity) is an active-site residue.

It belongs to the helicase family. UvrD subfamily. Heterotrimer of RecB, RecC and RecD. All subunits contribute to DNA-binding. Interacts with RecA. Mg(2+) is required as a cofactor.

It catalyses the reaction Exonucleolytic cleavage (in the presence of ATP) in either 5'- to 3'- or 3'- to 5'-direction to yield 5'-phosphooligonucleotides.. It carries out the reaction Couples ATP hydrolysis with the unwinding of duplex DNA by translocating in the 3'-5' direction.. The catalysed reaction is ATP + H2O = ADP + phosphate + H(+). In terms of biological role, a helicase/nuclease that prepares dsDNA breaks (DSB) for recombinational DNA repair. Binds to DSBs and unwinds DNA via a highly rapid and processive ATP-dependent bidirectional helicase activity. Unwinds dsDNA until it encounters a Chi (crossover hotspot instigator) sequence from the 3' direction. Cuts ssDNA a few nucleotides 3' to the Chi site. The properties and activities of the enzyme are changed at Chi. The Chi-altered holoenzyme produces a long 3'-ssDNA overhang and facilitates RecA-binding to the ssDNA for homologous DNA recombination and repair. Holoenzyme degrades any linearized DNA that is unable to undergo homologous recombination. In the holoenzyme this subunit contributes ATPase, 3'-5' helicase, exonuclease activity and loads RecA onto ssDNA. This is RecBCD enzyme subunit RecB from Chlamydia pneumoniae (Chlamydophila pneumoniae).